A 415-amino-acid polypeptide reads, in one-letter code: Serine hydroxymethyltransferase (415 aa).

Residues Leu117 and 121–123 each bind (6S)-5,6,7,8-tetrahydrofolate; that span reads GHL. At Lys226 the chain carries N6-(pyridoxal phosphate)lysine. (6S)-5,6,7,8-tetrahydrofolate-binding positions include Glu241 and 349–351; that span reads SPF.

Belongs to the SHMT family. Homodimer. Pyridoxal 5'-phosphate is required as a cofactor.

It localises to the cytoplasm. It carries out the reaction (6R)-5,10-methylene-5,6,7,8-tetrahydrofolate + glycine + H2O = (6S)-5,6,7,8-tetrahydrofolate + L-serine. It functions in the pathway one-carbon metabolism; tetrahydrofolate interconversion. The protein operates within amino-acid biosynthesis; glycine biosynthesis; glycine from L-serine: step 1/1. Catalyzes the reversible interconversion of serine and glycine with tetrahydrofolate (THF) serving as the one-carbon carrier. This reaction serves as the major source of one-carbon groups required for the biosynthesis of purines, thymidylate, methionine, and other important biomolecules. Also exhibits THF-independent aldolase activity toward beta-hydroxyamino acids, producing glycine and aldehydes, via a retro-aldol mechanism. The chain is Serine hydroxymethyltransferase from Trichlorobacter lovleyi (strain ATCC BAA-1151 / DSM 17278 / SZ) (Geobacter lovleyi).